We begin with the raw amino-acid sequence, 668 residues long: Kinesin-like protein KIF2B (668 aa).

Thr125 carries the phosphothreonine; by PLK1 modification. Residues 149–177 (CLREIEKLQKQREKRRRLQLEIRARRALD) are a coiled coil. Ser204 is modified (phosphoserine; by PLK1). Residues 213–543 (RICVCVRKRP…LRYANRVKEL (331 aa)) form the Kinesin motor domain. Position 303–310 (303–310 (GQTGSGKT)) interacts with ATP. Basic and acidic residues predominate over residues 585–604 (PTVEKEEEKESDELTSKKEP). The interval 585-605 (PTVEKEEEKESDELTSKKEPA) is disordered. The stretch at 646-667 (VLTDIQKKLQSLREDLQKKSQV) forms a coiled coil.

Belongs to the TRAFAC class myosin-kinesin ATPase superfamily. Kinesin family. MCAK/KIF2 subfamily. In terms of processing, phosphorylation at Thr-125 by PLK1 is required for activity in the correction of kinetochore-microtubules attachment errors, while phosphorylation at Ser-204 also by PLK1 is required for the kinetochore localization and activity in prometaphase.

It is found in the cytoplasm. Its subcellular location is the cytoskeleton. It localises to the microtubule organizing center. The protein localises to the centrosome. The protein resides in the spindle. It is found in the chromosome. Its subcellular location is the centromere. It localises to the kinetochore. Plus end-directed microtubule-dependent motor required for spindle assembly and chromosome movement during mitosis. Has microtubule depolymerization activity. Plays a role in chromosome congression. This chain is Kinesin-like protein KIF2B (Kif2b), found in Mus musculus (Mouse).